The chain runs to 410 residues: DNA replication and repair protein RecF (410 aa).

30-37 (GPNGHGKT) provides a ligand contact to ATP.

Belongs to the RecF family.

The protein resides in the cytoplasm. Functionally, the RecF protein is involved in DNA metabolism; it is required for DNA replication and normal SOS inducibility. RecF binds preferentially to single-stranded, linear DNA. It also seems to bind ATP. In Rhodococcus opacus (strain B4), this protein is DNA replication and repair protein RecF.